The sequence spans 311 residues: tRNA dimethylallyltransferase (311 aa).

11–18 is a binding site for ATP; it reads GPTASGKS. Position 13 to 18 (13 to 18) interacts with substrate; it reads TASGKS. 2 interaction with substrate tRNA regions span residues 36–39 and 160–164; these read DSMQ and QRLIR.

This sequence belongs to the IPP transferase family. In terms of assembly, monomer. Requires Mg(2+) as cofactor.

The enzyme catalyses adenosine(37) in tRNA + dimethylallyl diphosphate = N(6)-dimethylallyladenosine(37) in tRNA + diphosphate. Functionally, catalyzes the transfer of a dimethylallyl group onto the adenine at position 37 in tRNAs that read codons beginning with uridine, leading to the formation of N6-(dimethylallyl)adenosine (i(6)A). The chain is tRNA dimethylallyltransferase from Rickettsia prowazekii (strain Madrid E).